Here is a 326-residue protein sequence, read N- to C-terminus: Protein TMED8 (326 aa).

Residues M1 to A99 are disordered. The span at S50 to P65 shows a compositional bias: low complexity. In terms of domain architecture, GOLD spans P160–Y324. At K170 the chain carries N6-acetyllysine. Residues V234–S268 form a disordered region. Over residues S239 to E255 the composition is skewed to acidic residues.

The protein is Protein TMED8 (Tmed8) of Mus musculus (Mouse).